The primary structure comprises 285 residues: NAC domain-containing protein 92 (285 aa).

The 151-residue stretch at 20–170 (LPPGFRFHPT…EWVICRVFQK (151 aa)) folds into the NAC domain. Residues 117-176 (VGMKKTLVFYKGRAPKGVKTNWVMHEYRLEGKYCIENLPQTAKNEWVICRVFQKRADGTK) mediate DNA binding.

In terms of assembly, forms homodimers. Interacts with GLK1 and GLK2. Interacts with NLA. Ubiquitinated by NLA. Ubiquitination of NAC92 leads to its degradation by the proteasome during leaf senescence under nitrogen deficiency. Mostly expressed in roots and flowers, and, to a lower extent, in shoots and leaves. Particularly expressed in old and senescing tissues.

The protein localises to the nucleus. Transcription activator that binds to DNA in promoters of target genes on a specific bipartite motif 5'-[ACG][CA]GT[AG](5-6n)[CT]AC[AG]-3'. Promotes lateral root development. Triggers the expression of senescence-associated genes during age-, salt- and dark-induced senescence through a regulatory network that may involve cross-talk with salt- and H(2)O(2)-dependent signaling pathways. Also regulates genes during seed germination. Positively regulates aging-induced cell death. Involved in age-related resistance (ARR) against Pseudomonas syringae pv. tomato and Hyaloperonospora arabidopsidis. Antagonizes GLK1 and GLK2 transcriptional activity, shifting the balance from chloroplast maintenance towards deterioration during leaf senescence. Promotes the expression of senescence-associated genes, including ENDO1/BFN1, SWEET15/SAG29 and SINA1/At3g13672, during senescence onset. The chain is NAC domain-containing protein 92 from Arabidopsis thaliana (Mouse-ear cress).